A 146-amino-acid polypeptide reads, in one-letter code: UPF0735 ACT domain-containing protein Teth514_2312 (146 aa).

Residues 71 to 146 (TLSMVLDHMP…GVRKIEILGE (76 aa)) enclose the ACT domain.

Belongs to the UPF0735 family.

This is UPF0735 ACT domain-containing protein Teth514_2312 from Thermoanaerobacter sp. (strain X514).